The sequence spans 121 residues: Large ribosomal subunit protein bL31 (121 aa).

Residues 1-97 form a large ribosomal subunit protein bL31 region; sequence MKEGIHPDYK…AKENRAAKRA (97 aa). Zn(2+)-binding residues include Cys-16, Cys-18, Cys-36, and Cys-39. Positions 65-80 are enriched in low complexity; sequence ATPAKAEPAKKAPAAE. Positions 65–121 are disordered; sequence ATPAKAEPAKKAPAAEPAKKVEAAKENRAAKRAKAGKSKKSEAAPAAEAPAADAKPE. The tract at residues 74-121 is unknown; the sequence is KKAPAAEPAKKVEAAKENRAAKRAKAGKSKKSEAAPAAEAPAADAKPE. The span at 81-93 shows a compositional bias: basic and acidic residues; the sequence is PAKKVEAAKENRA. A compositionally biased stretch (low complexity) spans 107-121; it reads AAPAAEAPAADAKPE.

Belongs to the bacterial ribosomal protein bL31 family. Type A subfamily. In terms of assembly, part of the 50S ribosomal subunit. Requires Zn(2+) as cofactor.

In terms of biological role, binds the 23S rRNA. This is Large ribosomal subunit protein bL31 from Anaeromyxobacter dehalogenans (strain 2CP-C).